The sequence spans 437 residues: Trigger factor (437 aa).

Positions 163-248 constitute a PPIase FKBP-type domain; it reads DDRVTVDFEG…VKKIEASHLP (86 aa).

Belongs to the FKBP-type PPIase family. Tig subfamily.

The protein resides in the cytoplasm. The enzyme catalyses [protein]-peptidylproline (omega=180) = [protein]-peptidylproline (omega=0). Functionally, involved in protein export. Acts as a chaperone by maintaining the newly synthesized protein in an open conformation. Functions as a peptidyl-prolyl cis-trans isomerase. This Variovorax paradoxus (strain S110) protein is Trigger factor.